Consider the following 389-residue polypeptide: Lipid-A-disaccharide synthase (389 aa).

Belongs to the LpxB family.

It catalyses the reaction a lipid X + a UDP-2-N,3-O-bis[(3R)-3-hydroxyacyl]-alpha-D-glucosamine = a lipid A disaccharide + UDP + H(+). It participates in bacterial outer membrane biogenesis; LPS lipid A biosynthesis. In terms of biological role, condensation of UDP-2,3-diacylglucosamine and 2,3-diacylglucosamine-1-phosphate to form lipid A disaccharide, a precursor of lipid A, a phosphorylated glycolipid that anchors the lipopolysaccharide to the outer membrane of the cell. The polypeptide is Lipid-A-disaccharide synthase (Burkholderia orbicola (strain MC0-3)).